A 1106-amino-acid chain; its full sequence is GYF domain-containing protein gyf-1 (1106 aa).

A compositionally biased stretch (polar residues) spans 1–17 (MSSVSSAEPTAQQNFNP). Disordered regions lie at residues 1-50 (MSSV…GGFD), 160-370 (GALQ…DSTV), and 383-434 (KAST…SAWS). Positions 30 to 42 (RGGSISSGNNRSS) are enriched in low complexity. The span at 162-180 (LQNGQSPTSRWAPKSSWNK) shows a compositional bias: polar residues. Positions 207-224 (GRGGGRIGGENGFGGATN) are enriched in gly residues. The segment covering 229–243 (AAQNEDSPGTYQSKF) has biased composition (polar residues). Gly residues predominate over residues 248-261 (RGGGAGSVGRGGST). The span at 306-322 (VGSTSRTSTNAAPQSSE) shows a compositional bias: polar residues. 2 stretches are compositionally biased toward low complexity: residues 334–353 (QRTQQQQQQQQQQSTQQQAQ) and 390–410 (PPQQQQQQQQRSSAPVSAPSR). Residues 459-508 (PVQFYYMDPTETRRGPFPKDQMNVWFKAGYFTDESLRVQRGENGEYKTIG) enclose the GYF domain. Residues 584–746 (LDDHNRRLAE…ERKRAAERER (163 aa)) adopt a coiled-coil conformation. Disordered regions lie at residues 778–811 (AFTGAPKQVSPSGSEESDEWISTSKEVKHTKTAP), 909–928 (KNSQPKIAVPAKSAPTSAKV), 1026–1076 (AGGR…DGNI), and 1087–1106 (RLNKGEIDAVPSAPVNPSRR). The segment covering 786-801 (VSPSGSEESDEWISTS) has biased composition (polar residues). Positions 1046 to 1057 (SDSNSGSNSNSG) are enriched in low complexity.

This Caenorhabditis elegans protein is GYF domain-containing protein gyf-1.